Here is a 333-residue protein sequence, read N- to C-terminus: D-threonate 4-phosphate dehydrogenase (333 aa).

Positions 140 and 141 each coordinate substrate. Residues histidine 170, histidine 214, and histidine 270 each contribute to the a divalent metal cation site. Residues lysine 278, asparagine 287, and arginine 296 each coordinate substrate.

Belongs to the PdxA family. PdxA2 subfamily. Homodimer. Requires a divalent metal cation as cofactor.

It catalyses the reaction 4-O-phospho-D-threonate + NAD(+) = dihydroxyacetone phosphate + CO2 + NADH. Its function is as follows. Catalyzes the NAD-dependent oxidation and subsequent decarboxylation of D-threonate 4-phosphate to produce dihydroxyacetone phosphate (DHAP). Can also use 4-hydroxy-L-threonine 4-phosphate as substrate. This Cupriavidus necator (strain ATCC 17699 / DSM 428 / KCTC 22496 / NCIMB 10442 / H16 / Stanier 337) (Ralstonia eutropha) protein is D-threonate 4-phosphate dehydrogenase.